A 361-amino-acid polypeptide reads, in one-letter code: Serine/threonine-protein kinase SAPK9 (361 aa).

Residues 22–278 (YELVKEIGSG…MPEIKNHPWF (257 aa)) form the Protein kinase domain. ATP is bound by residues 28–36 (IGSGNFGVA) and lysine 51. Aspartate 141 acts as the Proton acceptor in catalysis.

This sequence belongs to the protein kinase superfamily. Ser/Thr protein kinase family. Interacts with BZIP46. In terms of processing, may be phosphorylated. Expressed in leaf sheaths and roots. Expressed in shoots of young seedlings.

It localises to the cytoplasm. The protein resides in the nucleus. The enzyme catalyses L-seryl-[protein] + ATP = O-phospho-L-seryl-[protein] + ADP + H(+). It catalyses the reaction L-threonyl-[protein] + ATP = O-phospho-L-threonyl-[protein] + ADP + H(+). With respect to regulation, activated by hyperosmotic stress and abscisic acid (ABA). May play a role in signal transduction of hyperosmotic response. Can phosphorylate BZIP46 in vitro. This is Serine/threonine-protein kinase SAPK9 (SAPK9) from Oryza sativa subsp. japonica (Rice).